The sequence spans 334 residues: Ornithine carbamoyltransferase (334 aa).

Residues 57 to 60, Q84, R108, and 135 to 138 each bind carbamoyl phosphate; these read STRT and HPTQ. L-ornithine is bound by residues N169, D233, and 237-238; that span reads SM. Carbamoyl phosphate-binding positions include 275-276 and R320; that span reads CL.

It belongs to the aspartate/ornithine carbamoyltransferase superfamily. OTCase family.

It is found in the cytoplasm. The enzyme catalyses carbamoyl phosphate + L-ornithine = L-citrulline + phosphate + H(+). It functions in the pathway amino-acid biosynthesis; L-arginine biosynthesis; L-arginine from L-ornithine and carbamoyl phosphate: step 1/3. Reversibly catalyzes the transfer of the carbamoyl group from carbamoyl phosphate (CP) to the N(epsilon) atom of ornithine (ORN) to produce L-citrulline. This Pasteurella multocida (strain Pm70) protein is Ornithine carbamoyltransferase (argF).